The primary structure comprises 284 residues: 4-hydroxybenzoate octaprenyltransferase (284 aa).

The next 9 helical transmembrane spans lie at 19–39, 42–62, 93–113, 114–134, 136–156, 161–181, 209–229, 235–252, and 264–284; these read IGTL…AKGM, FDVL…GCVI, IVLF…MNPL, TIKL…MKRF, HLPQ…AWAA, LPSI…AYDT, LMVG…GMHY, FYWA…QQHL, and AFLN…ITFW.

The protein belongs to the UbiA prenyltransferase family. Requires Mg(2+) as cofactor.

Its subcellular location is the cell inner membrane. The catalysed reaction is all-trans-octaprenyl diphosphate + 4-hydroxybenzoate = 4-hydroxy-3-(all-trans-octaprenyl)benzoate + diphosphate. The protein operates within cofactor biosynthesis; ubiquinone biosynthesis. Catalyzes the prenylation of para-hydroxybenzoate (PHB) with an all-trans polyprenyl group. Mediates the second step in the final reaction sequence of ubiquinone-8 (UQ-8) biosynthesis, which is the condensation of the polyisoprenoid side chain with PHB, generating the first membrane-bound Q intermediate 3-octaprenyl-4-hydroxybenzoate. This is 4-hydroxybenzoate octaprenyltransferase from Vibrio atlanticus (strain LGP32) (Vibrio splendidus (strain Mel32)).